The sequence spans 360 residues: Phospho-N-acetylmuramoyl-pentapeptide-transferase (360 aa).

Over 1 to 25 (MLVWLAEHLVKYYSGFNVFSYLTFR) the chain is Periplasmic. A helical transmembrane segment spans residues 26 to 46 (AIVSLLTALFISLWMGPRMIA). Over 47–71 (HLQKLSFGQVVRNDGPESHFSKRGT) the chain is Cytoplasmic. The helical transmembrane segment at 72–92 (PTMGGIMILTAIVISVLLWAY) threads the bilayer. A topological domain (periplasmic) is located at residue proline 93. Residues 94-114 (SNPYVWCVLVVLVGYGIIGFV) form a helical membrane-spanning segment. Residues 115–131 (DDYRKVVRKDTKGLIAR) are Cytoplasmic-facing. Residues 132 to 152 (WKYFWMSVIALGVAFALYLAG) traverse the membrane as a helical segment. The Periplasmic segment spans residues 153–167 (KDTPATQLVVPFFKD). The chain crosses the membrane as a helical span at residues 168–188 (VMPQLGLFYILLAYFVIVGTG). The Cytoplasmic portion of the chain corresponds to 189 to 198 (NAVNLTDGLD). The helical transmembrane segment at 199-219 (GLAIMPTVFVAGGFALVAWAT) threads the bilayer. Residues 220–235 (GNMNFASYLHIPYLRH) are Periplasmic-facing. The chain crosses the membrane as a helical span at residues 236–256 (AGELVIVCTAIVGAGLGFLWF). Residues 257–262 (NTYPAQ) lie on the Cytoplasmic side of the membrane. The chain crosses the membrane as a helical span at residues 263-283 (VFMGDVGSLALGGALGIIAVL). The Periplasmic segment spans residues 284 to 287 (LRQE). Residues 288-308 (FLLVIMGGVFVVETLSVILQV) form a helical membrane-spanning segment. Over 309-337 (GSFKLRGQRIFRMAPIHHHYELKGWPEPR) the chain is Cytoplasmic. Residues 338–358 (VIVRFWIISLMLVLIGLATLK) form a helical membrane-spanning segment. Topologically, residues 359–360 (VR) are periplasmic.

This sequence belongs to the glycosyltransferase 4 family. MraY subfamily. The cofactor is Mg(2+).

It is found in the cell inner membrane. The catalysed reaction is UDP-N-acetyl-alpha-D-muramoyl-L-alanyl-gamma-D-glutamyl-meso-2,6-diaminopimeloyl-D-alanyl-D-alanine + di-trans,octa-cis-undecaprenyl phosphate = di-trans,octa-cis-undecaprenyl diphospho-N-acetyl-alpha-D-muramoyl-L-alanyl-D-glutamyl-meso-2,6-diaminopimeloyl-D-alanyl-D-alanine + UMP. Its pathway is cell wall biogenesis; peptidoglycan biosynthesis. In terms of biological role, catalyzes the initial step of the lipid cycle reactions in the biosynthesis of the cell wall peptidoglycan: transfers peptidoglycan precursor phospho-MurNAc-pentapeptide from UDP-MurNAc-pentapeptide onto the lipid carrier undecaprenyl phosphate, yielding undecaprenyl-pyrophosphoryl-MurNAc-pentapeptide, known as lipid I. The chain is Phospho-N-acetylmuramoyl-pentapeptide-transferase from Escherichia coli O7:K1 (strain IAI39 / ExPEC).